The following is a 271-amino-acid chain: MPELPEVEVTRQGIAPHLEGNRVEALIVRNANLRWPVPELAQNIVGQTILGVRRRAKYLLIDTQAGTTIVHLGMSGSLRVLPKNTPVEKHDHIDLVMQNGRVLRFNDPRRFGAWLWSELPEAAHPLLEKLGPEPLSAAFHADYLQAALKGKKKAIKLCLMDNAIVVGVGNIYANEALFAAGIHPEAEAGKVDAERLTLLTAEVKTILTQAIKQGGTTLKDFTNADGKPGYFAQKLHVYGRGGETCTECGHLLSEIRLGQRTTVFCSLCQTK.

Residue Pro2 is the Schiff-base intermediate with DNA of the active site. The Proton donor role is filled by Glu3. Catalysis depends on Lys57, which acts as the Proton donor; for beta-elimination activity. His90, Arg109, and Lys151 together coordinate DNA. The FPG-type zinc finger occupies His236–Thr270. Catalysis depends on Arg260, which acts as the Proton donor; for delta-elimination activity.

It belongs to the FPG family. Monomer. The cofactor is Zn(2+).

The catalysed reaction is Hydrolysis of DNA containing ring-opened 7-methylguanine residues, releasing 2,6-diamino-4-hydroxy-5-(N-methyl)formamidopyrimidine.. It carries out the reaction 2'-deoxyribonucleotide-(2'-deoxyribose 5'-phosphate)-2'-deoxyribonucleotide-DNA = a 3'-end 2'-deoxyribonucleotide-(2,3-dehydro-2,3-deoxyribose 5'-phosphate)-DNA + a 5'-end 5'-phospho-2'-deoxyribonucleoside-DNA + H(+). Involved in base excision repair of DNA damaged by oxidation or by mutagenic agents. Acts as a DNA glycosylase that recognizes and removes damaged bases. Has a preference for oxidized purines, such as 7,8-dihydro-8-oxoguanine (8-oxoG). Has AP (apurinic/apyrimidinic) lyase activity and introduces nicks in the DNA strand. Cleaves the DNA backbone by beta-delta elimination to generate a single-strand break at the site of the removed base with both 3'- and 5'-phosphates. The sequence is that of Formamidopyrimidine-DNA glycosylase from Shewanella amazonensis (strain ATCC BAA-1098 / SB2B).